The chain runs to 1364 residues: DNA-directed RNA polymerase subunit beta' (1364 aa).

Residues 1 to 42 form a disordered region; the sequence is MTSSSSKSNKSRKSSKAAKDTTPVHESASRPLSKTPPPFRNH. Residues C250, C317, C324, and C327 each coordinate Zn(2+).

The protein belongs to the RNA polymerase beta' chain family. RpoC2 subfamily. As to quaternary structure, in cyanobacteria the RNAP catalytic core is composed of 2 alpha, 1 beta, 1 beta', 1 gamma and 1 omega subunit. When a sigma factor is associated with the core the holoenzyme is formed, which can initiate transcription. It depends on Zn(2+) as a cofactor.

The catalysed reaction is RNA(n) + a ribonucleoside 5'-triphosphate = RNA(n+1) + diphosphate. DNA-dependent RNA polymerase catalyzes the transcription of DNA into RNA using the four ribonucleoside triphosphates as substrates. In Parasynechococcus marenigrum (strain WH8102), this protein is DNA-directed RNA polymerase subunit beta'.